The primary structure comprises 299 residues: ATP synthase gamma chain (299 aa).

Belongs to the ATPase gamma chain family. As to quaternary structure, F-type ATPases have 2 components, CF(1) - the catalytic core - and CF(0) - the membrane proton channel. CF(1) has five subunits: alpha(3), beta(3), gamma(1), delta(1), epsilon(1). CF(0) has three main subunits: a, b and c.

The protein resides in the cell membrane. Produces ATP from ADP in the presence of a proton gradient across the membrane. The gamma chain is believed to be important in regulating ATPase activity and the flow of protons through the CF(0) complex. This chain is ATP synthase gamma chain, found in Clavibacter sepedonicus (Clavibacter michiganensis subsp. sepedonicus).